Reading from the N-terminus, the 765-residue chain is Polyadenylate-binding protein, cytoplasmic and nuclear (765 aa).

The segment covering 1–37 has biased composition (low complexity); the sequence is MSADASTTPAADSNVTSTPETSTTPAAPAPEVTAVES. The tract at residues 1–49 is disordered; the sequence is MSADASTTPAADSNVTSTPETSTTPAAPAPEVTAVESTTAPNASQPHSA. Polar residues predominate over residues 38–48; the sequence is TTAPNASQPHS. RRM domains lie at 49 to 127, 137 to 214, 230 to 307, and 333 to 470; these read ASLY…WSQR, GNVF…HHIS, TNVY…RAQK, and VNLY…LAQR. Disordered regions lie at residues 364-427 and 619-657; these read VMRD…ADKK and PGYGQGRGGVPVQQGQMRPGQGGRGQNAAQAPAGRPEEA. Residues 377–427 show a composition bias toward basic and acidic residues; it reads ESDKEKENKEATKENEKESSEAEKAEKTEEKPADSGDEKKEDKESKKADKK. The span at 628 to 637 shows a compositional bias: low complexity; the sequence is VPVQQGQMRP. The PABC domain maps to 659-736; it reads AGGLTAQALS…ALNVYDEYMK (78 aa). Positions 737-765 are disordered; sequence NKGGESEATGEAAKPKEAAKETSTEENKS. A compositionally biased stretch (basic and acidic residues) spans 749 to 765; sequence AKPKEAAKETSTEENKS.

Belongs to the polyadenylate-binding protein type-1 family.

The protein resides in the cytoplasm. The protein localises to the nucleus. Binds the poly(A) tail of mRNA. Appears to be an important mediator of the multiple roles of the poly(A) tail in mRNA biogenesis, stability and translation. In the nucleus, involved in both mRNA cleavage and polyadenylation. Is also required for efficient mRNA export to the cytoplasm. Acts in concert with a poly(A)-specific nuclease (PAN) to affect poly(A) tail shortening, which may occur concomitantly with either nucleocytoplasmic mRNA transport or translational initiation. In the cytoplasm, stimulates translation initiation and regulates mRNA decay through translation termination-coupled poly(A) shortening, probably mediated by PAN. The polypeptide is Polyadenylate-binding protein, cytoplasmic and nuclear (pab1) (Aspergillus oryzae (strain ATCC 42149 / RIB 40) (Yellow koji mold)).